We begin with the raw amino-acid sequence, 156 residues long: Arginine repressor (156 aa).

It belongs to the ArgR family.

The protein localises to the cytoplasm. It participates in amino-acid biosynthesis; L-arginine biosynthesis [regulation]. Regulates arginine biosynthesis genes. The polypeptide is Arginine repressor (Shewanella baltica (strain OS223)).